The primary structure comprises 461 residues: O-methyltransferase CTB2 (461 aa).

D288 provides a ligand contact to S-adenosyl-L-methionine. The active-site Proton acceptor is H339.

Belongs to the class I-like SAM-binding methyltransferase superfamily. Cation-independent O-methyltransferase family. COMT subfamily.

It participates in mycotoxin biosynthesis. Its function is as follows. O-methyltransferase; part of the gene cluster that mediates the biosynthesis of cercosporin, a light-activated, non-host-selective toxin. The perylenequinone chromophore of cercosporin absorbs light energy to attain an electronically-activated triplet state and produces active oxygen species such as the hydroxyl radical, superoxide, hydrogen peroxide or singlet oxygen upon reaction with oxygen molecules. These reactive oxygen species cause damage to various cellular components including lipids, proteins and nucleic acids. The first step of cercosporin biosynthesis is performed by the polyketide synthase CTB1 which catalyzes the formation of nor-toralactone. The starter unit acyltransferase (SAT) domain of CTB1 initiates polyketide extension by the selective utilization of acetyl-CoA, which is elongated to the heptaketide in the beta-ketoacyl synthase (KS) domain by successive condensations with six malonyl units introduced by the malonyl acyltransferase (MAT) domain. The product template (PT) domain catalyzes C4-C9 and C2-C11 aldol cyclizations and dehydrations to a trihydroxynaphthalene, which is thought to be delivered to the thioesterase (TE) domain for product release. The bifunctional enzyme CTB3 then methylates nor-toralactone to toralactone before conducting an unusual oxidative aromatic ring opening. The O-methyltransferase CTB2 further methylates the nascent OH-6 of the CBT3 product, blocking further oxidation at this site before the reductase CTB6 reduces the 2-oxopropyl ketone at position C7, giving naphthalene. The FAD-dependent monooxygenase CTB5 in concert with the multicopper oxidase CTB12 are responsible for homodimerization of naphthalene with CTB7 installing the dioxepine moiety, finally producing cercosporin. The fasciclin domain-containing protein CTB11 might act with CTB5 and CTB12 whereas the roles of CTB9 and CTB10 have still to be elucidated. In Cercospora nicotianae (Barn spot disease fungus), this protein is O-methyltransferase CTB2.